Consider the following 721-residue polypeptide: Catalase-peroxidase 1 (721 aa).

The tryptophyl-tyrosyl-methioninium (Trp-Tyr) (with M-249) cross-link spans W98–Y223. Catalysis depends on H99, which acts as the Proton acceptor. Positions Y223–M249 form a cross-link, tryptophyl-tyrosyl-methioninium (Tyr-Met) (with W-98). H264 is a binding site for heme b.

It belongs to the peroxidase family. Peroxidase/catalase subfamily. In terms of assembly, homodimer or homotetramer. Heme b serves as cofactor. In terms of processing, formation of the three residue Trp-Tyr-Met cross-link is important for the catalase, but not the peroxidase activity of the enzyme.

The enzyme catalyses H2O2 + AH2 = A + 2 H2O. It carries out the reaction 2 H2O2 = O2 + 2 H2O. In terms of biological role, bifunctional enzyme with both catalase and broad-spectrum peroxidase activity. The chain is Catalase-peroxidase 1 from Legionella pneumophila (strain Paris).